The following is a 34-amino-acid chain: Photosystem II reaction center protein M (34 aa).

The chain crosses the membrane as a helical span at residues 7–27 (GFVASLLFVLVPTVFLIILFI).

It belongs to the PsbM family. PSII is composed of 1 copy each of membrane proteins PsbA, PsbB, PsbC, PsbD, PsbE, PsbF, PsbH, PsbI, PsbJ, PsbK, PsbL, PsbM, PsbT, PsbX, PsbY, PsbZ, Psb30/Ycf12, peripheral proteins PsbO, CyanoQ (PsbQ), PsbU, PsbV and a large number of cofactors. It forms dimeric complexes.

It localises to the cellular thylakoid membrane. One of the components of the core complex of photosystem II (PSII). PSII is a light-driven water:plastoquinone oxidoreductase that uses light energy to abstract electrons from H(2)O, generating O(2) and a proton gradient subsequently used for ATP formation. It consists of a core antenna complex that captures photons, and an electron transfer chain that converts photonic excitation into a charge separation. This subunit is found at the monomer-monomer interface. In Synechococcus sp. (strain WH7803), this protein is Photosystem II reaction center protein M.